Here is a 264-residue protein sequence, read N- to C-terminus: NAD kinase 1 (264 aa).

Catalysis depends on Asp-45, which acts as the Proton acceptor. NAD(+) contacts are provided by residues 45–46 (DG), 122–123 (NE), Arg-148, Asp-150, 161–166 (TAYNKS), and Ala-185.

This sequence belongs to the NAD kinase family. A divalent metal cation is required as a cofactor.

The protein resides in the cytoplasm. It carries out the reaction NAD(+) + ATP = ADP + NADP(+) + H(+). Involved in the regulation of the intracellular balance of NAD and NADP, and is a key enzyme in the biosynthesis of NADP. Catalyzes specifically the phosphorylation on 2'-hydroxyl of the adenosine moiety of NAD to yield NADP. The polypeptide is NAD kinase 1 (Listeria innocua serovar 6a (strain ATCC BAA-680 / CLIP 11262)).